An 82-amino-acid polypeptide reads, in one-letter code: Immediate early response 3-interacting protein 1 (82 aa).

The next 2 helical transmembrane spans lie at 2–22 (AFTL…VAVL) and 62–82 (VMRV…LLFG).

It belongs to the YOS1 family.

The protein localises to the endoplasmic reticulum membrane. Its function is as follows. Regulator of endoplasmic reticulum secretion that acts as a key determinant of brain size. Required for secretion of extracellular matrix proteins. Required for correct brain development by depositing sufficient extracellular matrix proteins for tissue integrity and the proliferation of neural progenitors. Acts as a regulator of the unfolded protein response (UPR). The protein is Immediate early response 3-interacting protein 1 of Xenopus laevis (African clawed frog).